A 584-amino-acid polypeptide reads, in one-letter code: Delta 8-(E)-sphingolipid desaturase (584 aa).

Positions 7-82 constitute a Cytochrome b5 heme-binding domain; it reads KKIFTRSQII…FTRFKIGEIE (76 aa). Heme is bound by residues His42 and His65. The interval 109 to 134 is disordered; sequence NKNTSNKKTLDSKLDNDSSNSTSDLE. The helical transmembrane segment at 261–281 threads the bilayer; it reads LFLYSLSFLKINQLFLSAVFM. Positions 293-297 match the Histidine box-1 motif; sequence HDAGH. A helical membrane pass occupies residues 306-326; the sequence is IDNIFGMLIADWFGGLSLGWW. The Histidine box-2 signature appears at 330-334; the sequence is HNVHH. Transmembrane regions (helical) follow at residues 386–403, 423–443, and 455–475; these read YLYY…YRLS, YFEF…LVFK, and VMVS…SHFA. The Histidine box-3 motif lies at 514 to 518; sequence QAIHH.

This sequence belongs to the fatty acid desaturase type 1 family.

It localises to the membrane. The enzyme catalyses an N-acylsphing-4-enine + 2 Fe(II)-[cytochrome b5] + O2 + 2 H(+) = a (4E,8E)-4-sphinga-4,8-dienine ceramide + 2 Fe(III)-[cytochrome b5] + 2 H2O. Its pathway is lipid metabolism; sphingolipid metabolism. In terms of biological role, delta(8)-fatty-acid desaturase which introduces a double bond at the 8-position in the long-chain base (LCB) of ceramides. Required for the formation of the di-unsaturated sphingoid base (E,E)-sphinga-4,8-dienine during glucosylceramide (GluCer) biosynthesis. In Candida albicans (strain SC5314 / ATCC MYA-2876) (Yeast), this protein is Delta 8-(E)-sphingolipid desaturase.